Reading from the N-terminus, the 1262-residue chain is Putative late blight resistance protein homolog R1B-23 (1262 aa).

Coiled-coil stretches lie at residues D364–Q384 and R475–N496. Residues R475–E761 enclose the NB-ARC domain. An ATP-binding site is contributed by G508–T515. LRR repeat units follow at residues F890–L914, L933–M961, P1036–A1059, Y1064–H1083, L1084–Q1112, and F1133–I1157. The region spanning E1181–E1248 is the HMA domain.

The protein belongs to the disease resistance NB-LRR family.

Its subcellular location is the cytoplasm. It is found in the membrane. Confers resistance to late blight (Phytophthora infestans) races carrying the avirulence gene Avr1. Resistance proteins guard the plant against pathogens that contain an appropriate avirulence protein via an indirect interaction with this avirulence protein. That triggers a defense system including the hypersensitive response, which restricts the pathogen growth. The protein is Putative late blight resistance protein homolog R1B-23 (R1B-23) of Solanum demissum (Wild potato).